Here is a 419-residue protein sequence, read N- to C-terminus: G protein-activated inward rectifier potassium channel 4 (419 aa).

Topologically, residues 1–86 (MAGDSRNAMN…LFTTLVDLKW (86 aa)) are cytoplasmic. A Phosphoserine modification is found at Ser-5. Residues 87-111 (RFNLLVFTMVYTITWLFFGFIWWLI) traverse the membrane as a helical segment. At 112 to 135 (AYVRGDLDHVGDQEWIPCVENLSG) the chain is on the extracellular side. The segment at residues 136 to 147 (FVSAFLFSIETE) is an intramembrane region (helical; Pore-forming). The segment at residues 148 to 154 (TTIGYGF) is an intramembrane region (pore-forming). A Selectivity filter motif is present at residues 149 to 154 (TIGYGF). At 155–163 (RVITEKCPE) the chain is on the extracellular side. The helical transmembrane segment at 164 to 185 (GIILLLVQAILGSIVNAFMVGC) threads the bilayer. Residues 186–419 (MFVKISQPKK…SVSQATRGSM (234 aa)) lie on the Cytoplasmic side of the membrane. The tract at residues 388-419 (GCAEAGNEAEAEKDEEGEPNGLSVSQATRGSM) is disordered. Positions 394 to 405 (NEAEAEKDEEGE) are enriched in acidic residues. The span at 409–419 (LSVSQATRGSM) shows a compositional bias: polar residues.

The protein belongs to the inward rectifier-type potassium channel (TC 1.A.2.1) family. KCNJ5 subfamily. Associates with KCNJ3/GIRK1 to form a G-protein-activated heteromultimer pore-forming unit. Associates with KCNJ6/GRIK2 to form a G-protein-activated heteromultimer pore-forming unit. As to expression, expressed in the heart.

The protein localises to the membrane. The catalysed reaction is K(+)(in) = K(+)(out). Its activity is regulated as follows. Heteromultimer composed of KCNJ3/GIRK1 and KCNJ5/GIRK4 is activated by phosphatidylinositol 4,5 biphosphate (PtdIns(4,5)P2). Its function is as follows. Inward rectifier potassium channels are characterized by a greater tendency to allow potassium to flow into the cell rather than out of it. Their voltage dependence is regulated by the concentration of extracellular potassium; as external potassium is raised, the voltage range of the channel opening shifts to more positive voltages. The inward rectification is mainly due to the blockage of outward current by internal magnesium. Can be blocked by external barium. This potassium channel is controlled by G proteins. Forms a functional channel in association with KCNJ3/GIRK1. This chain is G protein-activated inward rectifier potassium channel 4 (Kcnj5), found in Mus musculus (Mouse).